The chain runs to 543 residues: Chaperonin GroEL (543 aa).

Residues 29-32 (TLGP), Lys50, 86-90 (DGTTT), Gly413, 480-482 (NAA), and Asp496 each bind ATP. Positions 524-543 (EKPEKKESTPASAGAGDMDF) are disordered.

This sequence belongs to the chaperonin (HSP60) family. In terms of assembly, forms a cylinder of 14 subunits composed of two heptameric rings stacked back-to-back. Interacts with the co-chaperonin GroES.

The protein localises to the cytoplasm. The enzyme catalyses ATP + H2O + a folded polypeptide = ADP + phosphate + an unfolded polypeptide.. In terms of biological role, together with its co-chaperonin GroES, plays an essential role in assisting protein folding. The GroEL-GroES system forms a nano-cage that allows encapsulation of the non-native substrate proteins and provides a physical environment optimized to promote and accelerate protein folding. This Thermus thermophilus (strain ATCC BAA-163 / DSM 7039 / HB27) protein is Chaperonin GroEL.